A 399-amino-acid polypeptide reads, in one-letter code: Lipoyl synthase, mitochondrial (399 aa).

The transit peptide at 1–14 (MALISRSCGAASRY) directs the protein to the mitochondrion. Positions 39 to 52 (AASTSSSSSPSPST) are enriched in low complexity. Residues 39 to 60 (AASTSSSSSPSPSTHNDRKKDL) are disordered. Residues Cys-128, Cys-133, Cys-139, Cys-159, Cys-163, Cys-166, and Ser-374 each contribute to the [4Fe-4S] cluster site. Positions 144–363 (EYATATATIM…EKVGQEMGFI (220 aa)) constitute a Radical SAM core domain.

This sequence belongs to the radical SAM superfamily. Lipoyl synthase family. It depends on [4Fe-4S] cluster as a cofactor.

The protein localises to the mitochondrion. The enzyme catalyses [[Fe-S] cluster scaffold protein carrying a second [4Fe-4S](2+) cluster] + N(6)-octanoyl-L-lysyl-[protein] + 2 oxidized [2Fe-2S]-[ferredoxin] + 2 S-adenosyl-L-methionine + 4 H(+) = [[Fe-S] cluster scaffold protein] + N(6)-[(R)-dihydrolipoyl]-L-lysyl-[protein] + 4 Fe(3+) + 2 hydrogen sulfide + 2 5'-deoxyadenosine + 2 L-methionine + 2 reduced [2Fe-2S]-[ferredoxin]. It participates in protein modification; protein lipoylation via endogenous pathway; protein N(6)-(lipoyl)lysine from octanoyl-[acyl-carrier-protein]: step 2/2. In terms of biological role, catalyzes the radical-mediated insertion of two sulfur atoms into the C-6 and C-8 positions of the octanoyl moiety bound to the lipoyl domains of lipoate-dependent enzymes, thereby converting the octanoylated domains into lipoylated derivatives. The protein is Lipoyl synthase, mitochondrial (lias) of Danio rerio (Zebrafish).